Reading from the N-terminus, the 344-residue chain is uncharacterized protein (344 aa).

The next 8 membrane-spanning stretches (helical) occupy residues 25-45 (GAGW…VGAV), 68-88 (FVDA…ADGV), 104-124 (GVVP…GWNC), 133-153 (SACA…GVGA), 161-181 (GVGT…LAVV), 224-244 (LGAF…DAAL), 276-296 (VFAL…PAAL), and 302-322 (LVTA…LAGV).

This sequence belongs to the peptidase S58 family.

The protein resides in the cell membrane. In terms of biological role, aminopeptidase. This is an uncharacterized protein from Mycobacterium bovis (strain ATCC BAA-935 / AF2122/97).